The following is a 161-amino-acid chain: MSCSIILPNLINFINNDNNNIFEKNNEIQKQQQEEENKSNQVNNILNSIIESKFTSLNPKLKIQETPNQYQIKALIPLNFNKEEISVNVKNNRLIISAFKEIKFENQEKTKLTKFEKYQKTINVSNKNLDFSSIKAQFKDNTLTITIFKQSFEKEIKINIE.

The region spanning 52–161 (SKFTSLNPKL…FEKEIKINIE (110 aa)) is the sHSP domain.

It belongs to the small heat shock protein (HSP20) family.

The polypeptide is Small heat shock protein hspJ (hspJ) (Dictyostelium discoideum (Social amoeba)).